The sequence spans 556 residues: MSEADARPSNFIRQIIDKDLADGKHTSVHTRFPPEPNGYLHIGHAKSICLNFGIAQDYQGQCNLRFDDTNPEKEDIEYVESIKKDVNWLGFEWDGEVCYSSNYFDKLYEYAIELINKGLAYVDELSPEQIREYRGTLKEPGKPSPYRDRSVEENLALFEKMRAGEFEEGKACLRAKIDMGSSFMVMRDPVLYRVRFATHHQTGDKWCIYPMYDFTHCISDALEGITHSICTLEFMDNRRLYDWVLDNITIDCRPHQYEFSRLNLEYTVMSKRKLNQLVTEKLVNGWDDPRMPTVSGLRRRGFTPASIREFCKRIGVTKQENMIEFSSLESCIRDDLNENAPRAMAVLDPVKVVIENFEVGAVENLTLANHPNKPEMGEREVPFTREVWIEREDFREEANKKYKRLVLGKEVRLRGAYVIKAERVEKDAEGNITTIYCTYDPETLGKNPADGRKVKGVIHWVSADKALPAEIRLYDRLFTVPNPAAAEDFASTINTDSLVVINGFVEPSLASAEAEQGYQFERMGYFCADSKDSTADNLVFNRTVGLRDTWAKIENQ.

Residues 34–44 (PEPNGYLHIGH) carry the 'HIGH' region motif. ATP contacts are provided by residues 35-37 (EPN) and 41-47 (HIGHAKS). L-glutamine-binding residues include Asp-67 and Tyr-212. Residues Thr-231, 261–262 (RL), and 269–271 (MSK) each bind ATP. Positions 268–272 (VMSKR) match the 'KMSKS' region motif.

This sequence belongs to the class-I aminoacyl-tRNA synthetase family. In terms of assembly, monomer.

The protein localises to the cytoplasm. The catalysed reaction is tRNA(Gln) + L-glutamine + ATP = L-glutaminyl-tRNA(Gln) + AMP + diphosphate. In Vibrio parahaemolyticus serotype O3:K6 (strain RIMD 2210633), this protein is Glutamine--tRNA ligase.